The chain runs to 35 residues: MRSLVFVQLSLLSWEIFCGERSFVSMKAIFSCMYV.

Positions 1-18 (MRSLVFVQLSLLSWEIFC) are cleaved as a signal peptide.

This is an uncharacterized protein from Saccharomyces cerevisiae (strain ATCC 204508 / S288c) (Baker's yeast).